We begin with the raw amino-acid sequence, 184 residues long: Peptide deformylase (184 aa).

Residues C111 and H154 each contribute to the Fe cation site. E155 is a catalytic residue. Residue H158 participates in Fe cation binding.

It belongs to the polypeptide deformylase family. Fe(2+) is required as a cofactor.

It carries out the reaction N-terminal N-formyl-L-methionyl-[peptide] + H2O = N-terminal L-methionyl-[peptide] + formate. Its function is as follows. Removes the formyl group from the N-terminal Met of newly synthesized proteins. Requires at least a dipeptide for an efficient rate of reaction. N-terminal L-methionine is a prerequisite for activity but the enzyme has broad specificity at other positions. This chain is Peptide deformylase, found in Lactobacillus delbrueckii subsp. bulgaricus (strain ATCC 11842 / DSM 20081 / BCRC 10696 / JCM 1002 / NBRC 13953 / NCIMB 11778 / NCTC 12712 / WDCM 00102 / Lb 14).